Consider the following 34-residue polypeptide: Photosystem II reaction center protein M (34 aa).

A helical membrane pass occupies residues 5–25 (ILAFIATALFILIPTSFLLII).

Belongs to the PsbM family. In terms of assembly, PSII is composed of 1 copy each of membrane proteins PsbA, PsbB, PsbC, PsbD, PsbE, PsbF, PsbH, PsbI, PsbJ, PsbK, PsbL, PsbM, PsbT, PsbX, PsbY, PsbZ, Psb30/Ycf12, at least 3 peripheral proteins of the oxygen-evolving complex and a large number of cofactors. It forms dimeric complexes. Detected in both etioplasts and green leaves; PSII is only assembled in green leaves.

The protein resides in the plastid. It is found in the chloroplast thylakoid membrane. In terms of biological role, one of the components of the core complex of photosystem II (PSII). PSII is a light-driven water:plastoquinone oxidoreductase that uses light energy to abstract electrons from H(2)O, generating O(2) and a proton gradient subsequently used for ATP formation. It consists of a core antenna complex that captures photons, and an electron transfer chain that converts photonic excitation into a charge separation. This subunit is found at the monomer-monomer interface. The polypeptide is Photosystem II reaction center protein M (Hordeum vulgare (Barley)).